We begin with the raw amino-acid sequence, 308 residues long: Aspartate carbamoyltransferase catalytic subunit (308 aa).

Residues Arg55 and Thr56 each contribute to the carbamoyl phosphate site. Lys83 lines the L-aspartate pocket. 3 residues coordinate carbamoyl phosphate: Arg105, His133, and Gln136. 2 residues coordinate L-aspartate: Arg166 and Arg220. The carbamoyl phosphate site is built by Gly261 and Pro262.

It belongs to the aspartate/ornithine carbamoyltransferase superfamily. ATCase family. In terms of assembly, heterododecamer (2C3:3R2) of six catalytic PyrB chains organized as two trimers (C3), and six regulatory PyrI chains organized as three dimers (R2).

It catalyses the reaction carbamoyl phosphate + L-aspartate = N-carbamoyl-L-aspartate + phosphate + H(+). The protein operates within pyrimidine metabolism; UMP biosynthesis via de novo pathway; (S)-dihydroorotate from bicarbonate: step 2/3. In terms of biological role, catalyzes the condensation of carbamoyl phosphate and aspartate to form carbamoyl aspartate and inorganic phosphate, the committed step in the de novo pyrimidine nucleotide biosynthesis pathway. This Chlorobium limicola (strain DSM 245 / NBRC 103803 / 6330) protein is Aspartate carbamoyltransferase catalytic subunit.